The chain runs to 422 residues: Enolase (422 aa).

Glutamine 162 is a binding site for (2R)-2-phosphoglycerate. Glutamate 204 acts as the Proton donor in catalysis. Residues aspartate 241, glutamate 285, and aspartate 312 each coordinate Mg(2+). Residues lysine 337, arginine 366, serine 367, and lysine 388 each coordinate (2R)-2-phosphoglycerate. Lysine 337 acts as the Proton acceptor in catalysis.

It belongs to the enolase family. The cofactor is Mg(2+).

It is found in the cytoplasm. It localises to the secreted. The protein resides in the cell surface. It catalyses the reaction (2R)-2-phosphoglycerate = phosphoenolpyruvate + H2O. It participates in carbohydrate degradation; glycolysis; pyruvate from D-glyceraldehyde 3-phosphate: step 4/5. Its function is as follows. Catalyzes the reversible conversion of 2-phosphoglycerate (2-PG) into phosphoenolpyruvate (PEP). It is essential for the degradation of carbohydrates via glycolysis. The protein is Enolase of Wolinella succinogenes (strain ATCC 29543 / DSM 1740 / CCUG 13145 / JCM 31913 / LMG 7466 / NCTC 11488 / FDC 602W) (Vibrio succinogenes).